The following is a 435-amino-acid chain: MKGFFENLFRQNVRSVINTGKKVGARAAAREIINQEWGYPLANHEVLFLTNVYQPKHMKRHPFHIVRGTVAPLAVTLPLGFFVLNYFGVISSKLGLLIALSSFIGGLVIWTISIIFDSLYDQQHTYEVKRGLVMGMMMFIISEVMFFFSFFWSYFYISLSPNIAIGCVWPPYGLTVYSYMGLPLLNTVLLLLSGAILTDGYTILTEQKAVHEKNEKVLAVEEAFKNLMNLYKTKNSINTLTFVDERRDKFFGKESRQEDKIAEQKLIAISAGVKELRDLDWDLYFFENPENIEPNYKEPTNLSVIEYALITIYLKKRNKVIKTRLYFTLLCAVVFLACQGYEYFFAPFSMNDGIYGSLFFLLTGFHGFHVLVGSILIGIITIRFIVGNFNLLNVGTNFQIYKNKSTGFACTLFYWHFVDIVWIFLYIVIYWWGSR.

7 helical membrane-spanning segments follow: residues 70–90 (VAPL…FGVI), 96–116 (LLIA…SIIF), 132–152 (LVMG…SFFW), 176–196 (VYSY…SGAI), 325–345 (LYFT…EYFF), 360–380 (FLLT…IGII), and 412–432 (LFYW…IYWW).

It belongs to the cytochrome c oxidase subunit 3 family. In terms of assembly, component of the cytochrome c oxidase (complex IV, CIV), a multisubunit enzyme composed of a catalytic core of 3 subunits and several supernumerary subunits. The complex exists as a monomer or a dimer and forms supercomplexes (SCs) in the inner mitochondrial membrane with ubiquinol-cytochrome c oxidoreductase (cytochrome b-c1 complex, complex III, CIII).

The protein resides in the mitochondrion inner membrane. It carries out the reaction 4 Fe(II)-[cytochrome c] + O2 + 8 H(+)(in) = 4 Fe(III)-[cytochrome c] + 2 H2O + 4 H(+)(out). Component of the cytochrome c oxidase, the last enzyme in the mitochondrial electron transport chain which drives oxidative phosphorylation. The respiratory chain contains 3 multisubunit complexes succinate dehydrogenase (complex II, CII), ubiquinol-cytochrome c oxidoreductase (cytochrome b-c1 complex, complex III, CIII) and cytochrome c oxidase (complex IV, CIV), that cooperate to transfer electrons derived from NADH and succinate to molecular oxygen, creating an electrochemical gradient over the inner membrane that drives transmembrane transport and the ATP synthase. Cytochrome c oxidase is the component of the respiratory chain that catalyzes the reduction of oxygen to water. Electrons originating from reduced cytochrome c in the intermembrane space (IMS) are transferred via the dinuclear copper A center (CU(A)) of subunit 2 and heme A of subunit 1 to the active site in subunit 1, a binuclear center (BNC) formed by heme A3 and copper B (CU(B)). The BNC reduces molecular oxygen to 2 water molecules using 4 electrons from cytochrome c in the IMS and 4 protons from the mitochondrial matrix. In Dictyostelium discoideum (Social amoeba), this protein is Cytochrome c oxidase subunit 3 (cox3).